Consider the following 181-residue polypeptide: Translation initiation factor IF-3 (181 aa).

It belongs to the IF-3 family. In terms of assembly, monomer.

It localises to the cytoplasm. IF-3 binds to the 30S ribosomal subunit and shifts the equilibrium between 70S ribosomes and their 50S and 30S subunits in favor of the free subunits, thus enhancing the availability of 30S subunits on which protein synthesis initiation begins. This chain is Translation initiation factor IF-3, found in Cereibacter sphaeroides (strain ATCC 17023 / DSM 158 / JCM 6121 / CCUG 31486 / LMG 2827 / NBRC 12203 / NCIMB 8253 / ATH 2.4.1.) (Rhodobacter sphaeroides).